The sequence spans 351 residues: N-acetyl-gamma-glutamyl-phosphate reductase (351 aa).

The active site involves Cys154.

It belongs to the NAGSA dehydrogenase family. Type 1 subfamily.

The protein resides in the cytoplasm. The enzyme catalyses N-acetyl-L-glutamate 5-semialdehyde + phosphate + NADP(+) = N-acetyl-L-glutamyl 5-phosphate + NADPH + H(+). It functions in the pathway amino-acid biosynthesis; L-arginine biosynthesis; N(2)-acetyl-L-ornithine from L-glutamate: step 3/4. Its function is as follows. Catalyzes the NADPH-dependent reduction of N-acetyl-5-glutamyl phosphate to yield N-acetyl-L-glutamate 5-semialdehyde. In Synechocystis sp. (strain ATCC 27184 / PCC 6803 / Kazusa), this protein is N-acetyl-gamma-glutamyl-phosphate reductase.